A 216-amino-acid polypeptide reads, in one-letter code: Flavin-dependent thymidylate synthase (216 aa).

The region spanning 9 to 206 is the ThyX domain; the sequence is GFVELVDVMG…PWTYEAFIKY (198 aa). FAD is bound by residues Ser-55, 78 to 80, and Glu-86; that span reads RHR. DUMP contacts are provided by residues 75–78, 86–90, and Arg-145; these read QWFR and ELSGR. The ThyX motif signature appears at 78–88; the sequence is RHRIASYNELS. FAD-binding positions include 161–163 and Asn-167; that span reads NAR. Arg-172 is a binding site for dUMP. Residue Arg-172 is the Involved in ionization of N3 of dUMP, leading to its activation of the active site.

It belongs to the thymidylate synthase ThyX family. Homotetramer. It depends on FAD as a cofactor.

The catalysed reaction is dUMP + (6R)-5,10-methylene-5,6,7,8-tetrahydrofolate + NADPH + H(+) = dTMP + (6S)-5,6,7,8-tetrahydrofolate + NADP(+). The protein operates within pyrimidine metabolism; dTTP biosynthesis. Catalyzes the reductive methylation of 2'-deoxyuridine-5'-monophosphate (dUMP) to 2'-deoxythymidine-5'-monophosphate (dTMP) while utilizing 5,10-methylenetetrahydrofolate (mTHF) as the methyl donor, and NADPH and FADH(2) as the reductant. The chain is Flavin-dependent thymidylate synthase from Thermotoga neapolitana (strain ATCC 49049 / DSM 4359 / NBRC 107923 / NS-E).